Consider the following 486-residue polypeptide: Cobyric acid synthase (486 aa).

The 192-residue stretch at 248-439 (MLRVVVPVLP…VHGLFDTPAA (192 aa)) folds into the GATase cobBQ-type domain. C329 serves as the catalytic Nucleophile. Residue H431 is part of the active site.

The protein belongs to the CobB/CobQ family. CobQ subfamily.

Its pathway is cofactor biosynthesis; adenosylcobalamin biosynthesis. Functionally, catalyzes amidations at positions B, D, E, and G on adenosylcobyrinic A,C-diamide. NH(2) groups are provided by glutamine, and one molecule of ATP is hydrogenolyzed for each amidation. The sequence is that of Cobyric acid synthase from Paraburkholderia phytofirmans (strain DSM 17436 / LMG 22146 / PsJN) (Burkholderia phytofirmans).